We begin with the raw amino-acid sequence, 285 residues long: Release factor glutamine methyltransferase (285 aa).

S-adenosyl-L-methionine contacts are provided by residues 119–123 (GTGSG), E142, W175, and N191. 191-194 (NPPY) is a binding site for substrate.

The protein belongs to the protein N5-glutamine methyltransferase family. PrmC subfamily.

It catalyses the reaction L-glutaminyl-[peptide chain release factor] + S-adenosyl-L-methionine = N(5)-methyl-L-glutaminyl-[peptide chain release factor] + S-adenosyl-L-homocysteine + H(+). Methylates the class 1 translation termination release factors RF1/PrfA and RF2/PrfB on the glutamine residue of the universally conserved GGQ motif. The chain is Release factor glutamine methyltransferase from Burkholderia pseudomallei (strain K96243).